The primary structure comprises 384 residues: S-adenosylmethionine synthase (384 aa).

H15 is an ATP binding site. D17 contacts Mg(2+). E43 contacts K(+). L-methionine-binding residues include E56 and Q99. The flexible loop stretch occupies residues 99 to 109 (QSPDINQGVDR). ATP-binding positions include 164 to 166 (DAK), 230 to 231 (RF), D239, 245 to 246 (RK), A262, and K266. D239 serves as a coordination point for L-methionine. K270 is an L-methionine binding site.

This sequence belongs to the AdoMet synthase family. Homotetramer; dimer of dimers. It depends on Mg(2+) as a cofactor. The cofactor is K(+).

Its subcellular location is the cytoplasm. It carries out the reaction L-methionine + ATP + H2O = S-adenosyl-L-methionine + phosphate + diphosphate. The protein operates within amino-acid biosynthesis; S-adenosyl-L-methionine biosynthesis; S-adenosyl-L-methionine from L-methionine: step 1/1. Its function is as follows. Catalyzes the formation of S-adenosylmethionine (AdoMet) from methionine and ATP. The overall synthetic reaction is composed of two sequential steps, AdoMet formation and the subsequent tripolyphosphate hydrolysis which occurs prior to release of AdoMet from the enzyme. The polypeptide is S-adenosylmethionine synthase (Yersinia enterocolitica serotype O:8 / biotype 1B (strain NCTC 13174 / 8081)).